The following is a 149-amino-acid chain: Large ribosomal subunit protein uL15 (149 aa).

2 stretches are compositionally biased toward basic residues: residues 1–14 and 21–30; these read MPTR…HRGH and RVGKHRKHPG. Positions 1 to 43 are disordered; that stretch reads MPTRFSKTRKHRGHVSAGKGRVGKHRKHPGGRGMAGGQHHHRT.

This sequence belongs to the universal ribosomal protein uL15 family. As to quaternary structure, component of the large ribosomal subunit (LSU). Mature N.crassa ribosomes consist of a small (40S) and a large (60S) subunit. The 40S small subunit contains 1 molecule of ribosomal RNA (18S rRNA) and at least 32 different proteins. The large 60S subunit contains 3 rRNA molecules (26S, 5.8S and 5S rRNA) and at least 42 different proteins.

The protein resides in the cytoplasm. In terms of biological role, component of the ribosome, a large ribonucleoprotein complex responsible for the synthesis of proteins in the cell. The small ribosomal subunit (SSU) binds messenger RNAs (mRNAs) and translates the encoded message by selecting cognate aminoacyl-transfer RNA (tRNA) molecules. The large subunit (LSU) contains the ribosomal catalytic site termed the peptidyl transferase center (PTC), which catalyzes the formation of peptide bonds, thereby polymerizing the amino acids delivered by tRNAs into a polypeptide chain. The nascent polypeptides leave the ribosome through a tunnel in the LSU and interact with protein factors that function in enzymatic processing, targeting, and the membrane insertion of nascent chains at the exit of the ribosomal tunnel. This is Large ribosomal subunit protein uL15 (rpl-28) from Neurospora crassa (strain ATCC 24698 / 74-OR23-1A / CBS 708.71 / DSM 1257 / FGSC 987).